Reading from the N-terminus, the 273-residue chain is 4-hydroxy-tetrahydrodipicolinate reductase (273 aa).

Residue 12–17 (GAMGRM) participates in NAD(+) binding. Lys39 contributes to the NADP(+) binding site. NAD(+)-binding positions include 102–104 (GTT) and 126–129 (ASNF). Residue His159 is the Proton donor/acceptor of the active site. (S)-2,3,4,5-tetrahydrodipicolinate is bound at residue His160. Lys163 serves as the catalytic Proton donor. Position 169–170 (169–170 (GT)) interacts with (S)-2,3,4,5-tetrahydrodipicolinate.

Belongs to the DapB family. Homotetramer.

The protein localises to the cytoplasm. The enzyme catalyses (S)-2,3,4,5-tetrahydrodipicolinate + NAD(+) + H2O = (2S,4S)-4-hydroxy-2,3,4,5-tetrahydrodipicolinate + NADH + H(+). The catalysed reaction is (S)-2,3,4,5-tetrahydrodipicolinate + NADP(+) + H2O = (2S,4S)-4-hydroxy-2,3,4,5-tetrahydrodipicolinate + NADPH + H(+). It participates in amino-acid biosynthesis; L-lysine biosynthesis via DAP pathway; (S)-tetrahydrodipicolinate from L-aspartate: step 4/4. Functionally, catalyzes the conversion of 4-hydroxy-tetrahydrodipicolinate (HTPA) to tetrahydrodipicolinate. The chain is 4-hydroxy-tetrahydrodipicolinate reductase from Buchnera aphidicola subsp. Schizaphis graminum (strain Sg).